Here is a 418-residue protein sequence, read N- to C-terminus: Protein SSXT (418 aa).

An N-acetylserine modification is found at serine 2. The transcriptional activation stretch occupies residues serine 2–proline 186. The SH2-binding signature appears at tyrosine 50–methionine 53. Disordered regions lie at residues alanine 77–histidine 118 and glycine 188–glutamine 418. Low complexity predominate over residues tyrosine 225 to proline 251. The span at glycine 309–serine 318 shows a compositional bias: basic and acidic residues. Low complexity-rich tracts occupy residues glutamine 328–glutamine 337, tyrosine 345–glycine 366, and tyrosine 376–threonine 393. 2 consecutive repeat copies span residues glycine 344–glutamine 356 and glycine 357–glutamine 369. Positions glycine 344–glutamine 369 are 2 X 13 AA imperfect tandem repeats. Residues proline 374–proline 377 carry the SH2-binding motif. Residues proline 392 to proline 401 carry the SH3-binding motif. Over residues glutamine 394 to glutamine 403 the composition is skewed to pro residues. A compositionally biased stretch (low complexity) spans arginine 404–glutamine 418. The short motif at tyrosine 413–tyrosine 416 is the SH2-binding element.

It belongs to the SS18 family. Interacts with MLLT10. Isoform 1 interacts with RBM14 isoform 1. Isoform 2 interacts with RBM14 isoform 1. Component of the multiprotein chromatin-remodeling complexes SWI/SNF: SWI/SNF-A (BAF), SWI/SNF-B (PBAF) and related complexes. The canonical complex contains a catalytic subunit (either SMARCA4/BRG1/BAF190A or SMARCA2/BRM/BAF190B) and at least SMARCE1, ACTL6A/BAF53, SMARCC1/BAF155, SMARCC2/BAF170, and SMARCB1/SNF5/BAF47. Other subunits specific to each of the complexes may also be present permitting several possible combinations developmentally and tissue specific. Component of the SWI/SNF (GBAF) subcomplex, which includes at least BICRA or BICRAL (mutually exclusive), BRD9, SS18, the core BAF subunits, SMARCA2/BRM, SMARCA4/BRG1/BAF190A, ACTL6A/BAF53, SMARCC1/BAF155, and SMARCD1/BAF60A. As to expression, fairly ubiquitously expressed. Expressed in synovial sarcomas and in other human cell lines. The fusion genes SSXT-SSX1 and SSXT-SSX2 are expressed only in synovial sarcomas.

It localises to the nucleus. Its function is as follows. Appears to function synergistically with RBM14 as a transcriptional coactivator. Isoform 1 and isoform 2 function in nuclear receptor coactivation. Isoform 1 and isoform 2 function in general transcriptional coactivation. Component of SWI/SNF chromatin remodeling subcomplex GBAF that carries out key enzymatic activities, changing chromatin structure by altering DNA-histone contacts within a nucleosome in an ATP-dependent manner. In Homo sapiens (Human), this protein is Protein SSXT (SS18).